The sequence spans 183 residues: ATP synthase subunit b, chloroplastic (183 aa).

Residues 27–49 (LATNLINLTVVVGVLIYFGKGVL) form a helical membrane-spanning segment.

This sequence belongs to the ATPase B chain family. In terms of assembly, F-type ATPases have 2 components, F(1) - the catalytic core - and F(0) - the membrane proton channel. F(1) has five subunits: alpha(3), beta(3), gamma(1), delta(1), epsilon(1). F(0) has four main subunits: a(1), b(1), b'(1) and c(10-14). The alpha and beta chains form an alternating ring which encloses part of the gamma chain. F(1) is attached to F(0) by a central stalk formed by the gamma and epsilon chains, while a peripheral stalk is formed by the delta, b and b' chains.

Its subcellular location is the plastid. It is found in the chloroplast thylakoid membrane. F(1)F(0) ATP synthase produces ATP from ADP in the presence of a proton or sodium gradient. F-type ATPases consist of two structural domains, F(1) containing the extramembraneous catalytic core and F(0) containing the membrane proton channel, linked together by a central stalk and a peripheral stalk. During catalysis, ATP synthesis in the catalytic domain of F(1) is coupled via a rotary mechanism of the central stalk subunits to proton translocation. Functionally, component of the F(0) channel, it forms part of the peripheral stalk, linking F(1) to F(0). The protein is ATP synthase subunit b, chloroplastic of Oryza nivara (Indian wild rice).